The primary structure comprises 85 residues: Large ribosomal subunit protein bL27 (85 aa).

It belongs to the bacterial ribosomal protein bL27 family.

This is Large ribosomal subunit protein bL27 from Pseudomonas aeruginosa (strain LESB58).